Consider the following 220-residue polypeptide: MTVLPRVAIGLFGGSFDPVHEGHLRLARALRDELQLAEVRLLPAGTPPHRAPLAAAAADRLAMLRLALAGEPGLTVDERELSGRLSGYTVDTLAMIRRETGPEAALWWLVGGDQLASLDRWHRWRDLFGLAHLAVAVRPGFDAGSLPPAVAAEWQARQATDFANLPPAGRIRALSLSPVDISATAIRADLARGGDGLGHLAPAVRDYIHLHRLYRSESPA.

This sequence belongs to the NadD family.

The enzyme catalyses nicotinate beta-D-ribonucleotide + ATP + H(+) = deamido-NAD(+) + diphosphate. The protein operates within cofactor biosynthesis; NAD(+) biosynthesis; deamido-NAD(+) from nicotinate D-ribonucleotide: step 1/1. Functionally, catalyzes the reversible adenylation of nicotinate mononucleotide (NaMN) to nicotinic acid adenine dinucleotide (NaAD). This Laribacter hongkongensis (strain HLHK9) protein is Probable nicotinate-nucleotide adenylyltransferase.